Consider the following 327-residue polypeptide: Interleukin-12 subunit beta (327 aa).

The signal sequence occupies residues 1-22 (MHPQQLVVSWFSLVLLASPIVA). Positions 23–106 (IWELEKNVYV…LSRSLLLLHK (84 aa)) constitute an Ig-like C2-type domain. The cysteines at positions 50 and 90 are disulfide-linked. The N-linked (GlcNAc...) asparagine glycan is linked to Asn-223. Positions 238-327 (PPKNLQLRPL…WSEWASVSCS (90 aa)) constitute a Fibronectin type-III domain.

It belongs to the IL-12B family. In terms of assembly, heterodimer with IL12A; disulfide-linked. The heterodimer is known as interleukin IL-12. Heterodimer with IL23A; disulfide-linked. The heterodimer is known as interleukin IL-23. Also secreted as a monomer. Interacts with NBR1; this interaction promotes IL-12 secretion.

Its subcellular location is the secreted. In terms of biological role, cytokine that can act as a growth factor for activated T and NK cells, enhance the lytic activity of NK/lymphokine-activated killer cells, and stimulate the production of IFN-gamma by resting PBMC. Functionally, associates with IL23A to form the IL-23 interleukin, a heterodimeric cytokine which functions in innate and adaptive immunity. IL-23 may constitute with IL-17 an acute response to infection in peripheral tissues. IL-23 binds to a heterodimeric receptor complex composed of IL12RB1 and IL23R, activates the Jak-Stat signaling cascade, stimulates memory rather than naive T-cells and promotes production of pro-inflammatory cytokines. IL-23 induces autoimmune inflammation and thus may be responsible for autoimmune inflammatory diseases and may be important for tumorigenesis. The sequence is that of Interleukin-12 subunit beta (IL12B) from Capra hircus (Goat).